The chain runs to 607 residues: MAPACTTAHRRRAPLAAVLMLSLLPLLSPHADAAQVPWHSRTFKYVADNKDLKEVLRDLSASQSIATWISPEVTGTLSGKFETSPQEFLDDLAATYGFVWYYDGAVLRIWGANESKSATLSLGTASTKSLRDALARMRLDDPRFPVRYDEAAHVAVVSGPPGYVDTVSAIAKQVEQGARQRDATEVQVFQLHYAQAADHTTRIGGQDVQIPGMASLLRSMYGARGAPVAAIPGPGANFGRVQPIGGGSSNTFGNAAQGQGGGASGILGLPSSWFGGASSSDRVPVSPPLPGSGAAAAAGSPASVWPELSKGRRDESNPIDAGGGAELASDAPVIEADPRTNAILIRDRPERMQSYGTLIQQLDNRPKLLQIDATIIEIRDGAMQDLGVDWRFHSQHTDIQTGDGRGGQLGFNGALSGAATDGATTPVGGTLTAVLGDAGRYLMTRVSALETTNKAKIVSSPQVATLDNVEAVMDHKQQAFVRVSGYASADLYNLSAGVSLRVLPSVVPGSPNGQMRLDVRIEDGQLGSNTVDGIPVITSSEITTQAFVNEGQSLLIAGYAYDADETDLNAIPGLSKIPLVGNLFKHRQKSGTRMQRLFLLTPHVVSP.

An N-terminal signal peptide occupies residues 1 to 33 (MAPACTTAHRRRAPLAAVLMLSLLPLLSPHADA). The interval 277-332 (ASSSDRVPVSPPLPGSGAAAAAGSPASVWPELSKGRRDESNPIDAGGGAELASDAP) is disordered. A compositionally biased stretch (low complexity) spans 291–306 (GSGAAAAAGSPASVWP).

Belongs to the bacterial secretin family. T3SS SctC subfamily. In terms of assembly, the core secretion machinery of the T3SS is composed of approximately 20 different proteins, including cytoplasmic components, a base, an export apparatus and a needle. This subunit is part of the base, which anchors the injectisome in the bacterial cell envelope. Forms a stable homooligomeric complex.

It is found in the cell outer membrane. In terms of biological role, component of the type III secretion system (T3SS), also called injectisome, which is used to inject bacterial effector proteins into eukaryotic host cells. Forms a ring-shaped multimeric structure with an apparent central pore in the outer membrane. Necessary for both basic pathogenicity and the induction of the hypersensitive response in resistant plants. The sequence is that of Type 3 secretion system secretin from Xanthomonas euvesicatoria.